Consider the following 248-residue polypeptide: Probable transcriptional regulatory protein HCH_04926 (248 aa).

It belongs to the TACO1 family.

The protein resides in the cytoplasm. The chain is Probable transcriptional regulatory protein HCH_04926 from Hahella chejuensis (strain KCTC 2396).